A 412-amino-acid chain; its full sequence is L-cysteine:1D-myo-inositol 2-amino-2-deoxy-alpha-D-glucopyranoside ligase (412 aa).

Zn(2+) is bound at residue Cys-45. L-cysteinyl-5'-AMP contacts are provided by residues 45–48 (CGIT), Thr-60, and 83–85 (NIT). Residues 47–57 (ITPYDAAHLGH) carry the 'HIGH' region motif. Residues 185–190 (ERGGDP) carry the 'ERGGDP' region motif. Position 225 (Trp-225) interacts with L-cysteinyl-5'-AMP. Cys-229 is a binding site for Zn(2+). 247-249 (GDD) lines the L-cysteinyl-5'-AMP pocket. His-254 contributes to the Zn(2+) binding site. An L-cysteinyl-5'-AMP-binding site is contributed by Val-281. Residues 287-291 (KMSKS) carry the 'KMSKS' region motif.

The protein belongs to the class-I aminoacyl-tRNA synthetase family. MshC subfamily. As to quaternary structure, monomer. It depends on Zn(2+) as a cofactor.

It carries out the reaction 1D-myo-inositol 2-amino-2-deoxy-alpha-D-glucopyranoside + L-cysteine + ATP = 1D-myo-inositol 2-(L-cysteinylamino)-2-deoxy-alpha-D-glucopyranoside + AMP + diphosphate + H(+). Functionally, catalyzes the ATP-dependent condensation of GlcN-Ins and L-cysteine to form L-Cys-GlcN-Ins. The chain is L-cysteine:1D-myo-inositol 2-amino-2-deoxy-alpha-D-glucopyranoside ligase from Thermobifida fusca (strain YX).